Here is a 338-residue protein sequence, read N- to C-terminus: Ketol-acid reductoisomerase (NADP(+)) (338 aa).

Positions 1–181 constitute a KARI N-terminal Rossmann domain; sequence MNVFYDKDAD…GGGRAGIIET (181 aa). Residues 24-27, Arg47, and Ser52 each bind NADP(+); that span reads YGSQ. His107 is an active-site residue. NADP(+) is bound at residue Gly133. Residues 182-327 form the KARI C-terminal knotted domain; that stretch reads NFREETETDL…AKLRAMMPWI (146 aa). Mg(2+)-binding residues include Asp190, Glu194, Glu226, and Glu230. A substrate-binding site is contributed by Ser251.

It belongs to the ketol-acid reductoisomerase family. Mg(2+) is required as a cofactor.

The enzyme catalyses (2R)-2,3-dihydroxy-3-methylbutanoate + NADP(+) = (2S)-2-acetolactate + NADPH + H(+). It carries out the reaction (2R,3R)-2,3-dihydroxy-3-methylpentanoate + NADP(+) = (S)-2-ethyl-2-hydroxy-3-oxobutanoate + NADPH + H(+). Its pathway is amino-acid biosynthesis; L-isoleucine biosynthesis; L-isoleucine from 2-oxobutanoate: step 2/4. It functions in the pathway amino-acid biosynthesis; L-valine biosynthesis; L-valine from pyruvate: step 2/4. In terms of biological role, involved in the biosynthesis of branched-chain amino acids (BCAA). Catalyzes an alkyl-migration followed by a ketol-acid reduction of (S)-2-acetolactate (S2AL) to yield (R)-2,3-dihydroxy-isovalerate. In the isomerase reaction, S2AL is rearranged via a Mg-dependent methyl migration to produce 3-hydroxy-3-methyl-2-ketobutyrate (HMKB). In the reductase reaction, this 2-ketoacid undergoes a metal-dependent reduction by NADPH to yield (R)-2,3-dihydroxy-isovalerate. The polypeptide is Ketol-acid reductoisomerase (NADP(+)) (Burkholderia lata (strain ATCC 17760 / DSM 23089 / LMG 22485 / NCIMB 9086 / R18194 / 383)).